Here is a 297-residue protein sequence, read N- to C-terminus: uncharacterized protein (297 aa).

The active site involves E46.

This sequence belongs to the PhzF family. Homodimer and homotetramer.

This is an uncharacterized protein from Escherichia coli (strain K12).